A 298-amino-acid polypeptide reads, in one-letter code: Protein transport protein SEC13-1 (298 aa).

WD repeat units lie at residues 7–46, 51–92, 97–138, 143–196, 203–245, and 253–292; these read AHND…HKLV, GHEG…WSQI, VHTA…TATP, AHAI…QSYL, GHSD…GPWV, and EFPD…KWES.

Belongs to the WD repeat SEC13 family. As to quaternary structure, the COPII coat is composed of at least 5 proteins: the SEC23/24 complex, the SEC13/31 complex, and the protein SAR1. Component of the nuclear pore complex (NPC). NPC constitutes the exclusive means of nucleocytoplasmic transport. NPCs allow the passive diffusion of ions and small molecules and the active, nuclear transport receptor-mediated bidirectional transport of macromolecules such as proteins, RNAs, ribonucleoparticles (RNPs), and ribosomal subunits across the nuclear envelope. Due to its 8-fold rotational symmetry, all subunits are present with 8 copies or multiples thereof.

Its subcellular location is the cytoplasmic vesicle. The protein localises to the COPII-coated vesicle membrane. It is found in the endoplasmic reticulum membrane. It localises to the nucleus. The protein resides in the nuclear pore complex. Functionally, component of the coat protein complex II (COPII) which promotes the formation of transport vesicles from the endoplasmic reticulum (ER). The coat has two main functions, the physical deformation of the endoplasmic reticulum membrane into vesicles and the selection of cargo molecules. It also functions as a component of the nuclear pore complex (NPC). NPC components, collectively referred to as nucleoporins (NUPs), can play the role of both NPC structural components and of docking or interaction partners for transiently associated nuclear transport factors. SEC13 is required for efficient mRNA export from the nucleus to the cytoplasm and for correct nuclear pore biogenesis and distribution. The protein is Protein transport protein SEC13-1 (SEC131) of Candida glabrata (strain ATCC 2001 / BCRC 20586 / JCM 3761 / NBRC 0622 / NRRL Y-65 / CBS 138) (Yeast).